The primary structure comprises 1035 residues: MGVPALFRWLSNKYPKIISPVIEEQPYEVNGEQIPVDTTRPNPNGEELDNLYLDMNGIVHPCTHPEGKPPPANEQEMMLEIFNYTDRVVNMVRPRKLLMIAVDGVAPRAKMNQQRARRFRSAQEAKEADEKKEEFRKQFLKKSKGDQEIHEEVIQKTWDSNVITPGTPFMDILAASLRYWIAYKLNTDPAWEKLKIIISDATVPGEGEHKIMEFVRSQRAAPEHDPNTRHVIYGLDADLIMLGLATHEPHFRVLREDVFFQESKARTCHLCGQAGHKAEECRGQAKEKNGQFDEKGKGTSLKPFIWLNVSILREYLAVELYVPHQPFPFDLERALDDWVFMCFFVGNDFLPHLPSLDIRENGIDTLIAIWRDNIPVMGGYLTKDGHVEFKKAQLILQGLAKQEDAIFRRRRQVEEKKLANEKRRKEEAQARDRARKRRRSSPNYEPSEPPASNRARGGGGDSAPPNDVELIIPGRGELSRENRELTHSMVVNRGAVYRANMANKSAAAILKSKLMKGSQEGDDTAESTPMPDADGASDSKIEPTSPSVLGKRKAEEPEGETDTPADNTDSTPKPSKDDEMPPDTVRLWEEGYADRYYEQKFGVDPQDKEFRHKVARAYAEGLAWVLLYYFQGCPSWNWYYPYHYAPFAADFVDIGDMELSFEKGTPFKPFEQLMGVLPASSNHAIPEVFHDLMQDPESEIIDFYPEDFAVDLNGKKFAWQGVILLPFIDEKRLLAAMEKKYPLLSDDERHRNTVGREVLLLSDGHPLYQDLVANFYSKKQGAPKYTLNMRVSEGLAGRVERNETYIPHSSLVSSLEEYGMPTLEDDRSLTVNYEIPKSNHIHKSMLLRGVKFPPPALDNADIQATRSKAQHSGRSFGGAPFRGGHGNRGGRINYASDRPNPFAAHLDPNFMPPSNAGAQGMPSGWAPPVPGSANFSRGPPPPPRGNHRNHYGSGHAQQQGYQQTNYGRNDYYGRGQQGHQHQGSYGNQSGQYSGRQSGYGGAEYRGGGYQRGGYQGQGQGRDYYNSRNQGGYGRY.

The CCHC-type zinc finger occupies 266-283 (RTCHLCGQAGHKAEECRG). Residues 406–434 (IFRRRRQVEEKKLANEKRRKEEAQARDRA) are a coiled coil. The span at 417-432 (KLANEKRRKEEAQARD) shows a compositional bias: basic and acidic residues. Disordered stretches follow at residues 417–470 (KLAN…DVEL), 515–583 (MKGS…MPPD), and 865–1035 (TRSK…YGRY). Residues 564 to 573 (PADNTDSTPK) show a composition bias toward polar residues. A compositionally biased stretch (gly residues) spans 880–889 (PFRGGHGNRG). Over residues 955–967 (HAQQQGYQQTNYG) the composition is skewed to polar residues. Over residues 972–996 (YGRGQQGHQHQGSYGNQSGQYSGRQ) the composition is skewed to low complexity. Positions 997 to 1019 (SGYGGAEYRGGGYQRGGYQGQGQ) are enriched in gly residues.

Belongs to the 5'-3' exonuclease family. XRN2/RAT1 subfamily. In terms of assembly, interacts with RAI1; the interaction is direct, stabilizes RAT1 protein structure and may stimulate its exoribonuclease activity. The interaction also stimulates RAI1 pyrophosphohydrolase activity, probably by recruiting it to mRNA substrates.

It is found in the nucleus. In terms of biological role, possesses 5'-&gt;3' exoribonuclease activity. Required for the processing of nuclear mRNA and rRNA precursors. May promote the termination of transcription by RNA polymerase II. Essential for vegetative cell growth and chromosome segregation. The chain is 5'-3' exoribonuclease 2 (rat1) from Aspergillus oryzae (strain ATCC 42149 / RIB 40) (Yellow koji mold).